Consider the following 250-residue polypeptide: tRNA pseudouridine synthase A (250 aa).

The Nucleophile role is filled by Asp52. Residue Tyr111 participates in substrate binding.

This sequence belongs to the tRNA pseudouridine synthase TruA family. In terms of assembly, homodimer.

It catalyses the reaction uridine(38/39/40) in tRNA = pseudouridine(38/39/40) in tRNA. Functionally, formation of pseudouridine at positions 38, 39 and 40 in the anticodon stem and loop of transfer RNAs. This chain is tRNA pseudouridine synthase A, found in Methylobacterium sp. (strain 4-46).